A 424-amino-acid chain; its full sequence is Serine hydroxymethyltransferase (424 aa).

Residues leucine 118 and 122-124 each bind (6S)-5,6,7,8-tetrahydrofolate; that span reads GHL. Lysine 227 bears the N6-(pyridoxal phosphate)lysine mark. (6S)-5,6,7,8-tetrahydrofolate-binding positions include glutamate 243 and 351-353; that span reads SPF.

The protein belongs to the SHMT family. In terms of assembly, homodimer. Pyridoxal 5'-phosphate is required as a cofactor.

Its subcellular location is the cytoplasm. The enzyme catalyses (6R)-5,10-methylene-5,6,7,8-tetrahydrofolate + glycine + H2O = (6S)-5,6,7,8-tetrahydrofolate + L-serine. It participates in one-carbon metabolism; tetrahydrofolate interconversion. The protein operates within amino-acid biosynthesis; glycine biosynthesis; glycine from L-serine: step 1/1. Functionally, catalyzes the reversible interconversion of serine and glycine with tetrahydrofolate (THF) serving as the one-carbon carrier. This reaction serves as the major source of one-carbon groups required for the biosynthesis of purines, thymidylate, methionine, and other important biomolecules. Also exhibits THF-independent aldolase activity toward beta-hydroxyamino acids, producing glycine and aldehydes, via a retro-aldol mechanism. The protein is Serine hydroxymethyltransferase of Thermosipho africanus (strain TCF52B).